Here is a 27-residue protein sequence, read N- to C-terminus: Pyruvate dehydrogenase protein X component, mitochondrial (27 aa).

Residues 1–27 form a disordered region; the sequence is FRLSPAARNILEKHSLDASQGTATGPR. The Peripheral subunit-binding (PSBD) domain maps to 2–27; that stretch reads RLSPAARNILEKHSLDASQGTATGPR. N6-acetyllysine is present on K13. Phosphoserine is present on S15. Residues 17 to 27 show a composition bias toward polar residues; that stretch reads DASQGTATGPR.

This sequence belongs to the 2-oxoacid dehydrogenase family. In terms of assembly, part of the inner core of the multimeric pyruvate dehydrogenase complex that is composed of about 48 DLAT and 12 PDHX molecules. This core binds multiple copies of pyruvate dehydrogenase (subunits PDH1A and PDHB, E1), dihydrolipoamide acetyltransferase (DLAT, E2) and lipoamide dehydrogenase (DLD, E3). Interacts with SIRT4. Interacts with DLD.

It is found in the mitochondrion matrix. Functionally, required for anchoring dihydrolipoamide dehydrogenase (E3) to the dihydrolipoamide transacetylase (E2) core of the pyruvate dehydrogenase complexes of eukaryotes. This specific binding is essential for a functional PDH complex. The protein is Pyruvate dehydrogenase protein X component, mitochondrial of Mesocricetus auratus (Golden hamster).